The chain runs to 365 residues: Protein RecA (365 aa).

73 to 80 contributes to the ATP binding site; sequence GPESSGKT.

The protein belongs to the RecA family.

It is found in the cytoplasm. Functionally, can catalyze the hydrolysis of ATP in the presence of single-stranded DNA, the ATP-dependent uptake of single-stranded DNA by duplex DNA, and the ATP-dependent hybridization of homologous single-stranded DNAs. It interacts with LexA causing its activation and leading to its autocatalytic cleavage. This is Protein RecA from Prochlorococcus marinus (strain MIT 9312).